A 332-amino-acid polypeptide reads, in one-letter code: Glycerol-3-phosphate dehydrogenase [NAD(P)+] (332 aa).

4 residues coordinate NADPH: S11, W12, K32, and K106. The sn-glycerol 3-phosphate site is built by K106, G137, and S139. A141 contributes to the NADPH binding site. The sn-glycerol 3-phosphate site is built by K192, D245, S255, R256, and N257. The active-site Proton acceptor is K192. NADPH is bound at residue R256. The NADPH site is built by V280 and E282.

It belongs to the NAD-dependent glycerol-3-phosphate dehydrogenase family.

It localises to the cytoplasm. It catalyses the reaction sn-glycerol 3-phosphate + NAD(+) = dihydroxyacetone phosphate + NADH + H(+). The catalysed reaction is sn-glycerol 3-phosphate + NADP(+) = dihydroxyacetone phosphate + NADPH + H(+). It participates in membrane lipid metabolism; glycerophospholipid metabolism. Functionally, catalyzes the reduction of the glycolytic intermediate dihydroxyacetone phosphate (DHAP) to sn-glycerol 3-phosphate (G3P), the key precursor for phospholipid synthesis. The sequence is that of Glycerol-3-phosphate dehydrogenase [NAD(P)+] from Macrococcus caseolyticus (strain JCSC5402) (Macrococcoides caseolyticum).